We begin with the raw amino-acid sequence, 292 residues long: MVRSLLLVHAHPDDESISTGATMAYYAAQGVRVTLVTCTLGEEGEILVPDLRLLAADEADQLGGYRISELAAACAALGVTDHRFLGGAGRYRDSGMMGTPANNHPRAFWQADLDTAAAYLVDIIRDVRPQVVITYDENGGYGHPDHIQAHRVTVRAVDQTRDIVTKLYAAAVPRSAFAEGIQALRAAGDTTSFAGVEDVDNVPFVRPDEVITTAIDARAFLDRKIAALRAHATQIAVDGPFFALSNNIGQRAFGVEYYILLRGTAYPAGDGRENDLFAGVDVVQAGDVGAAT.

The Zn(2+) site is built by histidine 11, aspartate 14, and histidine 146.

The protein belongs to the MshB deacetylase family. Zn(2+) is required as a cofactor.

The enzyme catalyses 1D-myo-inositol 2-acetamido-2-deoxy-alpha-D-glucopyranoside + H2O = 1D-myo-inositol 2-amino-2-deoxy-alpha-D-glucopyranoside + acetate. In terms of biological role, catalyzes the deacetylation of 1D-myo-inositol 2-acetamido-2-deoxy-alpha-D-glucopyranoside (GlcNAc-Ins) in the mycothiol biosynthesis pathway. The polypeptide is 1D-myo-inositol 2-acetamido-2-deoxy-alpha-D-glucopyranoside deacetylase (Acidothermus cellulolyticus (strain ATCC 43068 / DSM 8971 / 11B)).